We begin with the raw amino-acid sequence, 203 residues long: Urease accessory protein UreE (203 aa).

The disordered stretch occupies residues 170 to 203 (EHHGHSHSHSHSHSHDHDHQHGPSCSHGHHHGHR).

The protein belongs to the UreE family.

Its subcellular location is the cytoplasm. Functionally, involved in urease metallocenter assembly. Binds nickel. Probably functions as a nickel donor during metallocenter assembly. This is Urease accessory protein UreE from Burkholderia mallei (strain SAVP1).